We begin with the raw amino-acid sequence, 350 residues long: Pleckstrin (350 aa).

The PH 1 domain occupies 4 to 101 (KRIREGYLVK…WVRDIKKAIK (98 aa)). Lys64 is modified (N6-acetyllysine). Phosphoserine; by PKC occurs at positions 113 and 117. Residues 136 to 221 (TEKGIKELNL…NPDAFYYFPD (86 aa)) enclose the DEP domain. One can recognise a PH 2 domain in the interval 244–347 (VIIKQGCLLK…WIRAIQMASR (104 aa)).

Major protein kinase C substrate of platelets. In Homo sapiens (Human), this protein is Pleckstrin (PLEK).